The chain runs to 228 residues: Sugar fermentation stimulation protein homolog (228 aa).

It belongs to the SfsA family.

The polypeptide is Sugar fermentation stimulation protein homolog (Psychromonas ingrahamii (strain DSM 17664 / CCUG 51855 / 37)).